Reading from the N-terminus, the 329-residue chain is 4-hydroxy-3-methylbut-2-enyl diphosphate reductase (329 aa).

Position 27 (cysteine 27) interacts with [4Fe-4S] cluster. Residues histidine 56 and histidine 89 each coordinate (2E)-4-hydroxy-3-methylbut-2-enyl diphosphate. Histidine 56 and histidine 89 together coordinate dimethylallyl diphosphate. The isopentenyl diphosphate site is built by histidine 56 and histidine 89. Residue cysteine 111 participates in [4Fe-4S] cluster binding. A (2E)-4-hydroxy-3-methylbut-2-enyl diphosphate-binding site is contributed by histidine 139. Residue histidine 139 participates in dimethylallyl diphosphate binding. Histidine 139 is a binding site for isopentenyl diphosphate. Catalysis depends on glutamate 141, which acts as the Proton donor. Threonine 179 contacts (2E)-4-hydroxy-3-methylbut-2-enyl diphosphate. Cysteine 209 is a [4Fe-4S] cluster binding site. (2E)-4-hydroxy-3-methylbut-2-enyl diphosphate is bound by residues serine 237, serine 238, asparagine 239, and serine 281. The dimethylallyl diphosphate site is built by serine 237, serine 238, asparagine 239, and serine 281. The isopentenyl diphosphate site is built by serine 237, serine 238, asparagine 239, and serine 281.

The protein belongs to the IspH family. The cofactor is [4Fe-4S] cluster.

It catalyses the reaction isopentenyl diphosphate + 2 oxidized [2Fe-2S]-[ferredoxin] + H2O = (2E)-4-hydroxy-3-methylbut-2-enyl diphosphate + 2 reduced [2Fe-2S]-[ferredoxin] + 2 H(+). It carries out the reaction dimethylallyl diphosphate + 2 oxidized [2Fe-2S]-[ferredoxin] + H2O = (2E)-4-hydroxy-3-methylbut-2-enyl diphosphate + 2 reduced [2Fe-2S]-[ferredoxin] + 2 H(+). Its pathway is isoprenoid biosynthesis; dimethylallyl diphosphate biosynthesis; dimethylallyl diphosphate from (2E)-4-hydroxy-3-methylbutenyl diphosphate: step 1/1. It participates in isoprenoid biosynthesis; isopentenyl diphosphate biosynthesis via DXP pathway; isopentenyl diphosphate from 1-deoxy-D-xylulose 5-phosphate: step 6/6. Catalyzes the conversion of 1-hydroxy-2-methyl-2-(E)-butenyl 4-diphosphate (HMBPP) into a mixture of isopentenyl diphosphate (IPP) and dimethylallyl diphosphate (DMAPP). Acts in the terminal step of the DOXP/MEP pathway for isoprenoid precursor biosynthesis. The polypeptide is 4-hydroxy-3-methylbut-2-enyl diphosphate reductase (Methylibium petroleiphilum (strain ATCC BAA-1232 / LMG 22953 / PM1)).